A 262-amino-acid chain; its full sequence is Small ribosomal subunit protein uS2 (262 aa).

The protein belongs to the universal ribosomal protein uS2 family.

The chain is Small ribosomal subunit protein uS2 from Roseiflexus sp. (strain RS-1).